The following is a 230-amino-acid chain: DNA ADP-ribosyl transferase (230 aa).

Residues 26 to 230 enclose the DarT domain; that stretch reads WIVWHFTHAD…KYVIKPGMYY (205 aa). NAD(+) is bound by residues 30-32, Gly-39, Leu-47, and Arg-67; that span reads HFT. Residue Arg-67 is the Proton acceptor of the active site. Glu-183 is a catalytic residue.

Belongs to the DarT ADP-ribosyltransferase family. Interacts with cognate antitoxin DarG (via C-terminus); this heterodimeric complex neutralizes the toxic effect of DarT by preventing ssDNA binding to DarT and consequently inactivating the toxin by direct protein-protein interactions.

It carries out the reaction a thymidine in DNA + NAD(+) = an N-(ADP-alpha-D-ribosyl)-thymidine in DNA + nicotinamide + H(+). Functionally, toxic component of the hybrid type II/IV toxin-antitoxin (TA) system DarTG, which plays a crucial role in controlling bacterial growth and bacteriophage infection. ADP-ribosylates ssDNA, preferentially in the motif TTTW. In case of phage infection, DarT toxin ADP-ribosylates DNA, which inhibits both viral DNA and RNA synthesis and leads to abortive infection. Its toxic effect is neutralized by cognate antitoxin DarG. In Mycobacterium bovis (strain BCG / Pasteur 1173P2), this protein is DNA ADP-ribosyl transferase.